The chain runs to 151 residues: Small ribosomal subunit protein uS15 (151 aa).

This sequence belongs to the universal ribosomal protein uS15 family.

This is Small ribosomal subunit protein uS15 (RpS13) from Plutella xylostella (Diamondback moth).